A 558-amino-acid polypeptide reads, in one-letter code: Putative F-box/LRR-repeat protein R542 (558 aa).

Residues 1–47 form the F-box domain; sequence MLLNLPYEILLIIFSLIESKKFFKLLSINKEVREFILTMLNQNPKSF. LRR repeat units follow at residues 73–105, 139–176, 177–220, 251–284, 285–317, 329–361, 369–395, 420–444, 445–477, and 481–508; these read KSTI…GLSF, CGKI…NLQC, CMRI…KIDG, LDKL…DLSG, CINL…GLSY, CFRI…GFFY, VVGY…TISD, CNNI…DLRY, CNNI…GISY, and SKKI…VFKT.

The chain is Putative F-box/LRR-repeat protein R542 from Acanthamoeba polyphaga mimivirus (APMV).